Reading from the N-terminus, the 197-residue chain is Molybdenum cofactor guanylyltransferase (197 aa).

Residues 12–14, Lys25, Asn53, Asp71, and Asp101 each bind GTP; that span reads LAG. Asp101 contacts Mg(2+).

The protein belongs to the MobA family. In terms of assembly, monomer. It depends on Mg(2+) as a cofactor.

Its subcellular location is the cytoplasm. It catalyses the reaction Mo-molybdopterin + GTP + H(+) = Mo-molybdopterin guanine dinucleotide + diphosphate. Functionally, transfers a GMP moiety from GTP to Mo-molybdopterin (Mo-MPT) cofactor (Moco or molybdenum cofactor) to form Mo-molybdopterin guanine dinucleotide (Mo-MGD) cofactor. The polypeptide is Molybdenum cofactor guanylyltransferase (Bordetella pertussis (strain Tohama I / ATCC BAA-589 / NCTC 13251)).